Consider the following 164-residue polypeptide: Putative F-box protein At1g59675 (164 aa).

One can recognise an F-box domain in the interval 9-56 (SQSDHVPLDLTIEILSRLPAKSVGRFRSVSKLWSANTTSQNFINSFAT).

This Arabidopsis thaliana (Mouse-ear cress) protein is Putative F-box protein At1g59675.